Reading from the N-terminus, the 702-residue chain is Phosphatase and actin regulator 4 (702 aa).

Disordered stretches follow at residues 1 to 37 (MEDPFEEADQPTTEPGMVLDSVEAGDTTPPTKRKSKF), 72 to 194 (RKPR…SSGG), and 222 to 363 (NLSV…PFPA). One copy of the RPEL 1 repeat lies at 63–88 (EVLERKISMRKPREELVKRGVLLEDP). The segment covering 72–84 (RKPREELVKRGVL) has biased composition (basic and acidic residues). Over residues 106-120 (GHTTPIGNARSSSPV) the composition is skewed to polar residues. Residues S116, S118, S131, and S147 each carry the phosphoserine modification. A compositionally biased stretch (polar residues) spans 147–156 (STGSQPNSEA). Pro residues predominate over residues 163–173 (VPKPPLLPPKR). Low complexity predominate over residues 233–250 (TLPAAPASTNTTATPSLT). A phosphoserine mark is found at S270 and S291. Polar residues predominate over residues 301–318 (PSTSVPTLESAAAITTKT). 2 positions are modified to phosphoserine: S342 and S344. A compositionally biased stretch (pro residues) spans 342–362 (SPSPPLPTHIPPEPPRTPPFP). Position 358 is a phosphothreonine (T358). At S427 the chain carries Phosphoserine. T432 bears the Phosphothreonine mark. S443, S453, and S464 each carry phosphoserine. The disordered stretch occupies residues 469-536 (IEMLKVPDDE…EEDEDESYQS (68 aa)). Over residues 484 to 497 (TCPSTFSEEMTPTS) the composition is skewed to polar residues. Positions 508–518 (EEEEKESDSDS) are enriched in acidic residues. A phosphoserine mark is found at S514, S516, S557, and S590. RPEL repeat units lie at residues 583-608 (NTLIRRLSQRPTPEELEQRNILQPKN) and 621-646 (RRLTRKLSQRPTVAELLARKILRFNE). Positions 592–615 (RPTPEELEQRNILQPKNEADRQAE) are disordered. At S628 the chain carries Phosphoserine.

The protein belongs to the phosphatase and actin regulator family. In terms of assembly, binds PPP1CA and actin.

The protein resides in the cytoplasm. The protein localises to the cell projection. It is found in the lamellipodium. Regulator of protein phosphatase 1 (PP1) required for neural tube and optic fissure closure, and enteric neural crest cell (ENCCs) migration during development. Acts as an activator of PP1 by interacting with PPP1CA and preventing phosphorylation of PPP1CA at 'Thr-320'. During neural tube closure, localizes to the ventral neural tube and activates PP1, leading to down-regulate cell proliferation within cranial neural tissue and the neural retina. Also acts as a regulator of migration of enteric neural crest cells (ENCCs) by activating PP1, leading to dephosphorylation and subsequent activation of cofilin (COF1 or COF2) and repression of the integrin signaling through the RHO/ROCK pathway. In Homo sapiens (Human), this protein is Phosphatase and actin regulator 4 (PHACTR4).